A 719-amino-acid polypeptide reads, in one-letter code: Plasmin and fibronectin-binding protein A (719 aa).

The first 45 residues, 1–45, serve as a signal peptide directing secretion; the sequence is MLKIVKKLEVLMKYFVPNEVFSIRKLKVGTCSVLLAISILGSQGI. Disordered stretches follow at residues 56–76 and 109–128; these read PMAT…SPTV and IRSN…TSTN. PbH1 repeat units lie at residues 287–310, 362–384, 397–419, 497–523, and 525–546; these read SNNV…QIAG, SENV…LVTA, PSNI…RFTG, VSDI…ELLR, and SDNL…VIED. A coiled-coil region spans residues 601 to 658; that stretch reads NNLSDKNEKEKNKEEKQSNSNNVIDSNQKNGEFNSSKDNRQMNDKIDNKQDNKTEEVN. Residues 606-617 show a composition bias toward basic and acidic residues; the sequence is KNEKEKNKEEKQ. The interval 606-655 is disordered; sequence KNEKEKNKEEKQSNSNNVIDSNQKNGEFNSSKDNRQMNDKIDNKQDNKTE. Over residues 623-634 the composition is skewed to polar residues; sequence VIDSNQKNGEFN. A compositionally biased stretch (basic and acidic residues) spans 635 to 655; sequence SSKDNRQMNDKIDNKQDNKTE. Positions 685–689 match the LPXTG sorting signal motif; the sequence is LPKTG. Thr688 carries the pentaglycyl murein peptidoglycan amidated threonine modification. The propeptide at 689–719 is removed by sortase; the sequence is GSNKIMELFLTVTGIGLLLTLKGLKYYGKDK.

The protein resides in the secreted. It is found in the cell wall. Its function is as follows. Acts as a fibronectin-dependent adhesin and invasin. Binds host (in this case human) fibronectin, plasmin, plasminogen, and human serum albumin. Where the bacteria adhere to human cells there is major recruitment of microvilli which seem to fuse to cover the streptococcal chains. Antibodies to this protein reduce bacterial growth in human blood. This chain is Plasmin and fibronectin-binding protein A (pfbA), found in Streptococcus pneumoniae (strain ATCC BAA-255 / R6).